The following is a 379-amino-acid chain: Reducing end xylose-releasing exo-oligoxylanase (379 aa).

Glu-66 (proton donor) is an active-site residue. Catalysis depends on Asp-259, which acts as the Proton acceptor.

It belongs to the glycosyl hydrolase 8 (cellulase D) family.

It catalyses the reaction Hydrolysis of (1-&gt;4)-beta-D-xylose residues from the reducing end of oligosaccharides.. Functionally, hydrolyzes xylooligosaccharides with a degree of polymerization of greater than or equal to 3, releasing xylose from the reducing end. Has low activity on birchwood xylan, oat spelt xylan and arabinoxylan. The protein is Reducing end xylose-releasing exo-oligoxylanase of Bifidobacterium adolescentis (strain ATCC 15703 / DSM 20083 / NCTC 11814 / E194a).